The primary structure comprises 246 residues: Cell division protein ZapD (246 aa).

This sequence belongs to the ZapD family. As to quaternary structure, interacts with FtsZ.

The protein resides in the cytoplasm. Cell division factor that enhances FtsZ-ring assembly. Directly interacts with FtsZ and promotes bundling of FtsZ protofilaments, with a reduction in FtsZ GTPase activity. This is Cell division protein ZapD from Vibrio parahaemolyticus serotype O3:K6 (strain RIMD 2210633).